A 153-amino-acid polypeptide reads, in one-letter code: 3-hydroxyacyl-[acyl-carrier-protein] dehydratase FabZ (153 aa).

His-57 is a catalytic residue.

The protein belongs to the thioester dehydratase family. FabZ subfamily.

It localises to the cytoplasm. The catalysed reaction is a (3R)-hydroxyacyl-[ACP] = a (2E)-enoyl-[ACP] + H2O. In terms of biological role, involved in unsaturated fatty acids biosynthesis. Catalyzes the dehydration of short chain beta-hydroxyacyl-ACPs and long chain saturated and unsaturated beta-hydroxyacyl-ACPs. The polypeptide is 3-hydroxyacyl-[acyl-carrier-protein] dehydratase FabZ (Xanthomonas oryzae pv. oryzae (strain MAFF 311018)).